We begin with the raw amino-acid sequence, 267 residues long: Strigolactone esterase D14 (267 aa).

The Nucleophile role is filled by serine 97. Active-site residues include aspartate 218 and histidine 247.

The protein belongs to the AB hydrolase superfamily. Interacts with SMXL6, SMXL7 and SMXL8. The interaction with SMXLs occurs in the presence of (2'R) stereoisomers of strigolactones, but not (2'S) stereoisomers. Interacts with MAX2. Forms a complex with MAX2 and SKP1A/ASK1 in presence of strigolactone. Expressed at high levels in rosette and cauline leaves and at lower levels in axillary buds, inflorescences, stems, roots and developing vascular tissue of cotyledons.

It localises to the cytoplasm. It is found in the nucleus. Its function is as follows. Involved in strigolactone signaling pathway. Does not move long distances acropetally in the plant to regulate shoot branching and is rapidly degraded in the presence of strigolactones. Functions downstream of strigolactone synthesis, as a component of hormone signaling and as an enzyme that participates in the conversion of strigolactones to the bioactive form. Acts probably as a strigolactone receptor. Strigolactones are hormones that inhibit tillering and shoot branching through the MAX-dependent pathway, contribute to the regulation of shoot architectural response to phosphate-limiting conditions and function as rhizosphere signal that stimulates hyphal branching of arbuscular mycorrhizal fungi and trigger seed germination of root parasitic weeds. Hydrolyzes methyl carlactonoate (MeCLA), but not carlactone (CL) or carlactonoic acid (CLA). Hydrolyzes the butenolide ring of strigolactones. The initial nucleophilic attack causes an electron shift, followed by the addition of a water molecule, to lead to the release of the ABC ring product and the formation of a 'Ser-97'-stabilized open lactone intermediate. Has no esterase activity for 4-nitrophenyl butyrate. Binds and hydrolyzes the synthetic strigolactone analog GR24 in vitro. Forms a stable covalent complex with the D-ring of strigolactone, which is essential for hormone bioactivity. The D-ring is attached to His-247 of the catalytic triad. The hydrolysis of strigolactone into a covalently linked intermediate molecule initiates a conformational change of D14 to facilitate interaction with MAX2 and formation of the D14-MAX2-SKP1/ASK1 complex to trigger strigolactone signaling. This mechanism defines D14 as a non-canonical hormone receptor with dual functions to generate and sense the active form of strigolactone. The protein is Strigolactone esterase D14 of Arabidopsis thaliana (Mouse-ear cress).